Here is a 179-residue protein sequence, read N- to C-terminus: Signal peptidase complex catalytic subunit SEC11A (179 aa).

Topologically, residues 1-16 are cytoplasmic; sequence MLSLDFLDDVRRMNKR. Residues 17–36 traverse the membrane as a helical; Signal-anchor for type II membrane protein segment; sequence QLYYQVLNFGMIVSSALMIW. At 37-179 the chain is on the lumenal side; sequence KGLMVITGSE…LGLFVLVHRE (143 aa). Residues Ser56, His96, and Asp122 each act as charge relay system in the active site. Residues 165 to 176 form a C-terminal short (CTS) helix region; sequence AVLFLLGLFVLV.

Belongs to the peptidase S26B family. Component of the signal peptidase complex paralog A (SPC-A) composed of a catalytic subunit SEC11A and three accessory subunits SPCS1, SPCS2 and SPCS3. Within the complex, interacts with SPCS2 and SPCS3. The complex induces a local thinning of the ER membrane which is used to measure the length of the signal peptide (SP) h-region of protein substrates. This ensures the selectivity of the complex towards h-regions shorter than 18-20 amino acids.

It localises to the endoplasmic reticulum membrane. The catalysed reaction is Cleavage of hydrophobic, N-terminal signal or leader sequences from secreted and periplasmic proteins.. In terms of biological role, catalytic component of the signal peptidase complex (SPC) which catalyzes the cleavage of N-terminal signal sequences from nascent proteins as they are translocated into the lumen of the endoplasmic reticulum. Specifically cleaves N-terminal signal peptides that contain a hydrophobic alpha-helix (h-region) shorter than 18-20 amino acids. The chain is Signal peptidase complex catalytic subunit SEC11A (SEC11A) from Bos taurus (Bovine).